An 867-amino-acid chain; its full sequence is G-protein coupled receptor family C group 6 member A (867 aa).

The signal sequence occupies residues 1-19 (MDLMSFILLWAGLMKVAEA). The Extracellular portion of the chain corresponds to 20–566 (SIAQFSQLGA…EYFDWNSGFA (547 aa)). N51, N55, N97, N296, N308, N336, N356, N370, N527, and N547 each carry an N-linked (GlcNAc...) asparagine glycan. The helical transmembrane segment at 567-587 (IVLLILAALGVLLLFFMSALF) threads the bilayer. The Cytoplasmic portion of the chain corresponds to 588 to 602 (FWQRHSPVVKAAGGP). A helical membrane pass occupies residues 603–623 (LCHLILVSLLGSFISVVFFVG). At 624–634 (EPSDLTCRARQ) the chain is on the extracellular side. The chain crosses the membrane as a helical span at residues 635-655 (VIFGFSFTLCVSCILVKSLKI). Residues 656–675 (LLAFEMNFELKELLCMLYKP) lie on the Cytoplasmic side of the membrane. Residues 676-696 (YMIVSVGMGVQIIICTVWLTL) form a helical membrane-spanning segment. The Extracellular segment spans residues 697 to 716 (YKPFKDKEVQTESILLECNE). A helical membrane pass occupies residues 717–737 (GFYVMFWLMLGYIALLALFCF). The Cytoplasmic segment spans residues 738–754 (TFAYIGRKLPQKYNEAK). A helical membrane pass occupies residues 755-775 (FITFSMVICLMAWIIFIPIHV). At 776-781 (TTSGKY) the chain is on the extracellular side. A helical transmembrane segment spans residues 782-802 (VPAVEMVVILISNYGILSCHF). Residues 803–867 (LPKSYIILFK…LSFVPEEKHE (65 aa)) lie on the Cytoplasmic side of the membrane.

It belongs to the G-protein coupled receptor 3 family. In terms of assembly, homodimer; disulfide-linked.

It is found in the cell membrane. In terms of biological role, olfactory receptor that is activated by amino acids that act as potent odorants in fish. Displays preference for acidic amino acids such as Glu over basic amino acids. The chain is G-protein coupled receptor family C group 6 member A (gprc6a) from Danio rerio (Zebrafish).